The primary structure comprises 210 residues: Na(+)-translocating NADH-quinone reductase subunit D (210 aa).

The next 6 membrane-spanning stretches (helical) occupy residues Pro14–Val34, Leu42–Ile62, Ile72–Ala92, Ala96–Gly116, Phe131–Val151, and Asn178–Ile198.

This sequence belongs to the NqrDE/RnfAE family. As to quaternary structure, composed of six subunits; NqrA, NqrB, NqrC, NqrD, NqrE and NqrF.

The protein resides in the cell inner membrane. It catalyses the reaction a ubiquinone + n Na(+)(in) + NADH + H(+) = a ubiquinol + n Na(+)(out) + NAD(+). In terms of biological role, NQR complex catalyzes the reduction of ubiquinone-1 to ubiquinol by two successive reactions, coupled with the transport of Na(+) ions from the cytoplasm to the periplasm. NqrA to NqrE are probably involved in the second step, the conversion of ubisemiquinone to ubiquinol. The protein is Na(+)-translocating NADH-quinone reductase subunit D of Shewanella frigidimarina (strain NCIMB 400).